Consider the following 397-residue polypeptide: Anhydro-N-acetylmuramic acid kinase (397 aa).

21–28 (GTSLDGVD) provides a ligand contact to ATP. Residues 373 to 384 (TPTNLPSVTGAS) show a composition bias toward polar residues. The tract at residues 373-397 (TPTNLPSVTGASARTPLGSLSVPGP) is disordered.

The protein belongs to the anhydro-N-acetylmuramic acid kinase family.

The catalysed reaction is 1,6-anhydro-N-acetyl-beta-muramate + ATP + H2O = N-acetyl-D-muramate 6-phosphate + ADP + H(+). The protein operates within amino-sugar metabolism; 1,6-anhydro-N-acetylmuramate degradation. It participates in cell wall biogenesis; peptidoglycan recycling. Functionally, catalyzes the specific phosphorylation of 1,6-anhydro-N-acetylmuramic acid (anhMurNAc) with the simultaneous cleavage of the 1,6-anhydro ring, generating MurNAc-6-P. Is required for the utilization of anhMurNAc either imported from the medium or derived from its own cell wall murein, and thus plays a role in cell wall recycling. This chain is Anhydro-N-acetylmuramic acid kinase, found in Salinibacter ruber (strain DSM 13855 / M31).